Consider the following 643-residue polypeptide: Replication protein E1 (643 aa).

The interval 28–60 is disordered; the sequence is THGQSQVSSDEDEDETETREDLDFIDNRVPGDG. The segment covering 36–45 has biased composition (acidic residues); sequence SDEDEDETET. The short motif at 84-86 is the Nuclear localization signal element; it reads KRK. Residues S90 and S103 each carry the phosphoserine; by host modification. The Nuclear export signal motif lies at 102–111; that stretch reads LSPRLDAISL. Residues 119–179 form a disordered region; it reads KRRLFETEPP…EADLTVHTPQ (61 aa). Basic and acidic residues predominate over residues 157 to 167; the sequence is VDVREEERQGG. The DNA-binding region stretch occupies residues 180-346; that stretch reads SGTDAAGSVL…QTLIGHSMED (167 aa). The 151-residue stretch at 445–595 folds into the SF3 helicase domain; that stretch reads VEFVSFLAAF…FPFASPGEPL (151 aa). 471 to 478 contacts ATP; the sequence is GPADTGKS. K552 participates in a covalent cross-link: Glycyl lysine isopeptide (Lys-Gly) (interchain with G-Cter in SUMO).

Belongs to the papillomaviridae E1 protein family. As to quaternary structure, can form hexamers. Interacts with E2 protein; this interaction increases E1 DNA binding specificity. Interacts with host DNA polymerase subunit POLA2. Interacts with host single stranded DNA-binding protein RPA1. Interacts with host TOP1; this interaction stimulates the enzymatic activity of TOP1. Phosphorylated. Post-translationally, sumoylated.

The protein resides in the host nucleus. It carries out the reaction Couples ATP hydrolysis with the unwinding of duplex DNA by translocating in the 3'-5' direction.. The catalysed reaction is ATP + H2O = ADP + phosphate + H(+). ATP-dependent DNA 3'-5' helicase required for initiation of viral DNA replication. It forms a complex with the viral E2 protein. The E1-E2 complex binds to the replication origin which contains binding sites for both proteins. During the initial step, a dimer of E1 interacts with a dimer of protein E2 leading to a complex that binds the viral origin of replication with high specificity. Then, a second dimer of E1 displaces the E2 dimer in an ATP-dependent manner to form the E1 tetramer. Following this, two E1 monomers are added to each half of the site, which results in the formation of two E1 trimers on the viral ori. Subsequently, two hexamers will be created. The double hexamer acts as a bi-directional helicase machinery and unwinds the viral DNA and then recruits the host DNA polymerase to start replication. The chain is Replication protein E1 from Human papillomavirus 57.